A 133-amino-acid chain; its full sequence is Putative pre-16S rRNA nuclease (133 aa).

It belongs to the YqgF nuclease family.

It is found in the cytoplasm. In terms of biological role, could be a nuclease involved in processing of the 5'-end of pre-16S rRNA. The chain is Putative pre-16S rRNA nuclease from Dehalococcoides mccartyi (strain ATCC BAA-2266 / KCTC 15142 / 195) (Dehalococcoides ethenogenes (strain 195)).